A 103-amino-acid chain; its full sequence is Secreted Ly-6/uPAR-related protein 1 (103 aa).

Residues Met-1–Ala-22 form the signal peptide. The region spanning Lys-24–Cys-73 is the UPAR/Ly6 domain. Cystine bridges form between Cys-25–Cys-50, Cys-28–Cys-37, Cys-43–Cys-73, Cys-77–Cys-93, and Cys-94–Cys-99.

As to quaternary structure, homodimer. Interacts with PLAU. Interacts with CHRNA7. Granulocytes. Expressed in skin. Predominantly expressed in the granular layer of skin, notably the acrosyringium. Identified in several biological fluids such as sweat, saliva, tears, plasma and urine.

The protein resides in the secreted. Has an antitumor activity. Was found to be a marker of late differentiation of the skin. Implicated in maintaining the physiological and structural integrity of the keratinocyte layers of the skin. In vitro down-regulates keratinocyte proliferation; the function may involve the proposed role as modulator of nicotinic acetylcholine receptors (nAChRs) activity. In vitro inhibits alpha-7-dependent nAChR currents in an allosteric manner. In T cells may be involved in regulation of intracellular Ca(2+) signaling. Seems to have an immunomodulatory function in the cornea. The function may implicate a possible role as a scavenger receptor for PLAU thereby blocking PLAU-dependent functions of PLAUR such as in cell migration and proliferation. The polypeptide is Secreted Ly-6/uPAR-related protein 1 (SLURP1) (Homo sapiens (Human)).